The following is a 251-amino-acid chain: GTP cyclohydrolase FolE2 (251 aa).

It belongs to the GTP cyclohydrolase IV family.

The enzyme catalyses GTP + H2O = 7,8-dihydroneopterin 3'-triphosphate + formate + H(+). The protein operates within cofactor biosynthesis; 7,8-dihydroneopterin triphosphate biosynthesis; 7,8-dihydroneopterin triphosphate from GTP: step 1/1. Its function is as follows. Converts GTP to 7,8-dihydroneopterin triphosphate. The chain is GTP cyclohydrolase FolE2 from Desulfotalea psychrophila (strain LSv54 / DSM 12343).